Reading from the N-terminus, the 228-residue chain is Leucokinins (228 aa).

The first 18 residues, 1–18 (MAMLLQVALPLLAAVSWG), serve as a signal peptide directing secretion. Residues 19–164 (WELNENDDSL…PRFSPVSAIQ (146 aa)) constitute a propeptide that is removed on maturation. Residues 80–118 (EFSENNEAEDKSPTSAQNTQEHIPGNNFPPPAASNPPVN) are disordered. 2 positions are modified to glycine amide: glycine 180 and glycine 193. The propeptide occupies 197-209 (NTGRVHRQPKVVI). Residue glycine 217 is modified to Glycine amide. The propeptide occupies 221–228 (NQKDDNVF).

It localises to the secreted. Its function is as follows. Stimulates both fluid secretion by the Malpighian tubules and hindgut contractions. Depolarize the transepithelial voltage of the Malpighian tubules in concentrations of less than 10(-9) M and increase the frequency of hindgut contractions at concentrations above 10(-8) M. In Aedes aegypti (Yellowfever mosquito), this protein is Leucokinins.